Consider the following 131-residue polypeptide: Glycine cleavage system H protein (131 aa).

In terms of domain architecture, Lipoyl-binding spans 24–106; it reads TVRVGITDYA…YGEGWLVELQ (83 aa). At K65 the chain carries N6-lipoyllysine.

The protein belongs to the GcvH family. The glycine cleavage system is composed of four proteins: P, T, L and H. (R)-lipoate is required as a cofactor.

Its function is as follows. The glycine cleavage system catalyzes the degradation of glycine. The H protein shuttles the methylamine group of glycine from the P protein to the T protein. This chain is Glycine cleavage system H protein, found in Mycolicibacterium vanbaalenii (strain DSM 7251 / JCM 13017 / BCRC 16820 / KCTC 9966 / NRRL B-24157 / PYR-1) (Mycobacterium vanbaalenii).